A 313-amino-acid chain; its full sequence is Homoserine O-succinyltransferase (313 aa).

The Acyl-thioester intermediate role is filled by C142. Positions 163 and 192 each coordinate substrate. H235 acts as the Proton acceptor in catalysis. The active site involves E237. R249 is a binding site for substrate.

Belongs to the MetA family.

The protein resides in the cytoplasm. The enzyme catalyses L-homoserine + succinyl-CoA = O-succinyl-L-homoserine + CoA. The protein operates within amino-acid biosynthesis; L-methionine biosynthesis via de novo pathway; O-succinyl-L-homoserine from L-homoserine: step 1/1. Functionally, transfers a succinyl group from succinyl-CoA to L-homoserine, forming succinyl-L-homoserine. This chain is Homoserine O-succinyltransferase, found in Vibrio vulnificus (strain YJ016).